The chain runs to 637 residues: Sodium-dependent proline transporter (637 aa).

The Cytoplasmic segment spans residues 1–45 (MKKLQEAHLRKPITPDLLMTPSDQGDVDLDVDFAADRGNWTGKLD). Thr-20 is modified (phosphothreonine). Ser-22 bears the Phosphoserine mark. The next 3 helical transmembrane spans lie at 46–66 (FLLSCIGYCVGLGNVWRFPYR), 74–93 (AFLVPYFLMLAICGIPLFFL), and 117–137 (GAGAAMLLIVGLVAIYYNMII). The Extracellular portion of the chain corresponds to 138–214 (AYVLFYLFAS…QGIGRPGEIR (77 aa)). The N-linked (GlcNAc...) asparagine glycan is linked to Asn-182. 9 helical membrane-spanning segments follow: residues 215–233 (WNLCLCLLLAWVIVFLCIL), 242–259 (VVYFTATFPYLILLMLLV), 295–312 (IFYSLGVGFGGLLTFASY), 324–345 (FIVTLGNAITSILAGFAIFSVL), 378–397 (LPLSPFWSFLFFFMLLTLGL), 425–443 (VFSGLICVAMYLMGLILTT), 459–479 (SFGLMVVVITTCLAVTRVYGI), 500–519 (ACWLFLSPATLLALLVYSIV), and 538–556 (LGILMGLLSCLMIPAGMLV). Residues 557–637 (AVLREEGSLW…IAEEEEESMM (81 aa)) are Cytoplasmic-facing. 2 positions are modified to phosphoserine: Ser-573 and Ser-582. A Phosphothreonine modification is found at Thr-588. Phosphotyrosine is present on Tyr-591. 2 positions are modified to phosphoserine: Ser-598 and Ser-600.

This sequence belongs to the sodium:neurotransmitter symporter (SNF) (TC 2.A.22) family. SLC6A7 subfamily.

The protein localises to the synaptic cell membrane. It carries out the reaction L-proline(out) + chloride(out) + 2 Na(+)(out) = L-proline(in) + chloride(in) + 2 Na(+)(in). The catalysed reaction is L-pipecolate(out) + chloride(out) + 2 Na(+)(out) = L-pipecolate(in) + chloride(in) + 2 Na(+)(in). Its function is as follows. Brain specific sodium (and chloride)-dependent proline transporter. Terminates the action of proline by its high affinity sodium-dependent reuptake into presynaptic terminals. This chain is Sodium-dependent proline transporter, found in Mus musculus (Mouse).